The sequence spans 714 residues: Methyl-accepting chemotaxis protein TlpQ (714 aa).

Residues 12 to 32 (ITLLAGLCLLGVVALLVGLSV) form a helical membrane-spanning segment. In terms of domain architecture, Cache spans 50 to 290 (LDESARLRLE…LLGKNLAKAD (241 aa)). Histamine is bound by residues glutamate 170, 208 to 210 (YFD), and aspartate 239. A helical transmembrane segment spans residues 360–380 (TWVELGLGLGAAVLGLLVLWL). The 55-residue stretch at 383 to 437 (RGVTRPILGVAHMLRDIASGEGDLTQRLPHTGRDELGELAGWFNRFLDKLQPIIR) folds into the HAMP domain. In terms of domain architecture, Methyl-accepting transducer spans 442 to 678 (SVRDARSTAD…EINRNVAAIR (237 aa)).

Belongs to the methyl-accepting chemotaxis (MCP) protein family. In terms of assembly, homotetramer.

The protein localises to the cell membrane. Its function is as follows. Chemotactic-signal transducers respond to changes in the concentration of attractants and repellents in the environment, transduce a signal from the outside to the inside of the cell, and facilitate sensory adaptation through the variation of the level of methylation. TlpQ is a chemoreceptor that binds and mediates chemotaxis to histamine, a key biological signaling molecule. It binds histamine with high affinity, which permits responses to very low histamine concentrations. Chemotaxis to histamine may play a role in the virulence of P.aeruginosa by recruiting cells at the infection site and consequently modulating the expression of quorum-sensing-dependent virulence genes. TlpQ also binds and mediates chemotaxis to polyamines such as putrescine, spermidine, cadaverine, agmatine and ethylenediamine. In addition, binds the quorum-sensing signal autoinducer 2 (AI-2), thus inducing chemotaxis toward AI-2 and biofilm formation. The chain is Methyl-accepting chemotaxis protein TlpQ from Pseudomonas aeruginosa (strain ATCC 15692 / DSM 22644 / CIP 104116 / JCM 14847 / LMG 12228 / 1C / PRS 101 / PAO1).